Reading from the N-terminus, the 515-residue chain is Protein translocase subunit SecD (515 aa).

The helical transmembrane segment at 6–26 (LYSLIFIIILTAFAVWVDLPG) threads the bilayer. A disordered region spans residues 141-186 (AITNGNQNQNSTKNGTPTPGTTPTPESTPQANQTPVAANVTPTPED). Low complexity predominate over residues 150–169 (NSTKNGTPTPGTTPTPESTP). A compositionally biased stretch (polar residues) spans 170–186 (QANQTPVAANVTPTPED). Transmembrane regions (helical) follow at residues 322–342 (RSIR…ILYY), 344–364 (LPGF…FALF), 367–387 (IPVT…GMAV), 427–447 (ISTL…GASV), and 450–470 (GFAI…IFVT).

Belongs to the SecD/SecF family. SecD subfamily. As to quaternary structure, forms a complex with SecF. Part of the essential Sec protein translocation apparatus which comprises SecA, SecYEG and auxiliary proteins SecDF. Other proteins may also be involved.

It is found in the cell membrane. Part of the Sec protein translocase complex. Interacts with the SecYEG preprotein conducting channel. SecDF uses the proton motive force (PMF) to complete protein translocation after the ATP-dependent function of SecA. This Thermobaculum terrenum (strain ATCC BAA-798 / CCMEE 7001 / YNP1) protein is Protein translocase subunit SecD.